A 546-amino-acid chain; its full sequence is CTP synthase (546 aa).

The tract at residues 1–266 (MTTNYIFVTG…DDLVCARFGI (266 aa)) is amidoligase domain. Ser14 contacts CTP. Ser14 serves as a coordination point for UTP. Residues 15–20 (SLGKGI) and Asp72 each bind ATP. Positions 72 and 140 each coordinate Mg(2+). CTP contacts are provided by residues 147-149 (DIE), 187-192 (KTKPTQ), and Lys223. Residues 187-192 (KTKPTQ) and Lys223 each bind UTP. ATP is bound at residue 239 to 241 (KDV). One can recognise a Glutamine amidotransferase type-1 domain in the interval 291–542 (TIGMVGKYIE…VKAAGQNARG (252 aa)). Residue Gly352 participates in L-glutamine binding. The active-site Nucleophile; for glutamine hydrolysis is Cys379. L-glutamine is bound by residues 380 to 383 (LGMQ), Glu403, and Arg470. Active-site residues include His515 and Glu517.

The protein belongs to the CTP synthase family. As to quaternary structure, homotetramer.

It catalyses the reaction UTP + L-glutamine + ATP + H2O = CTP + L-glutamate + ADP + phosphate + 2 H(+). It carries out the reaction L-glutamine + H2O = L-glutamate + NH4(+). The catalysed reaction is UTP + NH4(+) + ATP = CTP + ADP + phosphate + 2 H(+). It participates in pyrimidine metabolism; CTP biosynthesis via de novo pathway; CTP from UDP: step 2/2. Its activity is regulated as follows. Allosterically activated by GTP, when glutamine is the substrate; GTP has no effect on the reaction when ammonia is the substrate. The allosteric effector GTP functions by stabilizing the protein conformation that binds the tetrahedral intermediate(s) formed during glutamine hydrolysis. Inhibited by the product CTP, via allosteric rather than competitive inhibition. Catalyzes the ATP-dependent amination of UTP to CTP with either L-glutamine or ammonia as the source of nitrogen. Regulates intracellular CTP levels through interactions with the four ribonucleotide triphosphates. The polypeptide is CTP synthase (Vibrio campbellii (strain ATCC BAA-1116)).